A 357-amino-acid polypeptide reads, in one-letter code: MGGALPPEIVDYMYRNGAFLLFLGFPQASEFGIDYKSWKTGEKFMGLKMIPPGVHFVYCSIKSAPRIGFFHNFKAGEILVKKWNTESETFEDEEVPTDQISEKKRQLKNMDSSLAPYPYENYRSWYGLTDFITADTVERIHPILGRITSQAELVSLETEFMENAEKEHKDSHFRNRVDRENPVRTRFTDQHGLPIMKIREGYEIRFQDIPPLTVSQNRVGIEYSDRLYRLLRALGGDWKQLLAEMQIAFVCFLQGQVFEGFEQWKRIIHLMSCCPNSLGSEKELFMSFIRVLFFQLKECPTDFFVDIVSRDNFLTTTLSMLFANVRDSAHAGDDLKKKTAQFKQYLTNQFKWDFNCD.

Belongs to the AAR2 family.

The protein is Protein AAR2 homolog of Caenorhabditis elegans.